Reading from the N-terminus, the 201-residue chain is Small ribosomal subunit protein uS4c (201 aa).

Positions 16–43 are disordered; sequence GALPGLTSKKPRSASDLRNQSRSGKRSQ. An S4 RNA-binding domain is found at 89 to 169; the sequence is MRLDNILFRL…LPKHLTLHSF (81 aa).

This sequence belongs to the universal ribosomal protein uS4 family. In terms of assembly, part of the 30S ribosomal subunit. Contacts protein S5. The interaction surface between S4 and S5 is involved in control of translational fidelity.

It localises to the plastid. The protein localises to the chloroplast. Its function is as follows. One of the primary rRNA binding proteins, it binds directly to 16S rRNA where it nucleates assembly of the body of the 30S subunit. In terms of biological role, with S5 and S12 plays an important role in translational accuracy. In Nymphaea alba (White water-lily), this protein is Small ribosomal subunit protein uS4c (rps4).